Here is a 408-residue protein sequence, read N- to C-terminus: Acetate kinase (408 aa).

N7 lines the Mg(2+) pocket. K14 provides a ligand contact to ATP. A substrate-binding site is contributed by R91. The Proton donor/acceptor role is filled by D148. Residues 208 to 212 and 283 to 285 each bind ATP; these read HLGNG and DLR. Residue E388 coordinates Mg(2+).

Belongs to the acetokinase family. As to quaternary structure, homodimer. It depends on Mg(2+) as a cofactor. The cofactor is Mn(2+).

The protein localises to the cytoplasm. The catalysed reaction is acetate + ATP = acetyl phosphate + ADP. It participates in metabolic intermediate biosynthesis; acetyl-CoA biosynthesis; acetyl-CoA from acetate: step 1/2. Functionally, catalyzes the formation of acetyl phosphate from acetate and ATP. Can also catalyze the reverse reaction. This Borrelia hermsii (strain HS1 / DAH) protein is Acetate kinase.